Consider the following 155-residue polypeptide: Cyanate hydratase (155 aa).

Residues R95, E98, and S121 contribute to the active site.

It belongs to the cyanase family.

It carries out the reaction cyanate + hydrogencarbonate + 3 H(+) = NH4(+) + 2 CO2. Functionally, catalyzes the reaction of cyanate with bicarbonate to produce ammonia and carbon dioxide. This Pseudomonas savastanoi pv. phaseolicola (strain 1448A / Race 6) (Pseudomonas syringae pv. phaseolicola (strain 1448A / Race 6)) protein is Cyanate hydratase.